A 303-amino-acid polypeptide reads, in one-letter code: Putative monooxygenase p33MONOX (303 aa).

Disordered regions lie at residues M1–M20, L37–K56, H66–V96, K156–S233, and R260–Q283. T44 is modified (phosphothreonine). The Flavin-containing monooxygenase motif motif lies at L67–V77. The span at S76–D89 shows a compositional bias: polar residues. A compositionally biased stretch (low complexity) spans A170–S183. T175 carries the phosphothreonine modification. S183 bears the Phosphoserine mark.

The protein belongs to the P33MONOX family. As to quaternary structure, interacts with NELFB, NOL12 and PRNP. As to expression, expressed in neuronal pyramidal cells of the hippocampus and in the neurons of the cortex.

It is found in the cytoplasm. Functionally, potential NADPH-dependent oxidoreductase. May be involved in the regulation of neuronal survival, differentiation and axonal outgrowth. This is Putative monooxygenase p33MONOX (P33monox) from Mus musculus (Mouse).